The chain runs to 488 residues: Glutamyl-tRNA(Gln) amidotransferase subunit A (488 aa).

Residues Lys-77 and Ser-152 each act as charge relay system in the active site. The active-site Acyl-ester intermediate is Ser-176.

Belongs to the amidase family. GatA subfamily. In terms of assembly, heterotrimer of A, B and C subunits.

It catalyses the reaction L-glutamyl-tRNA(Gln) + L-glutamine + ATP + H2O = L-glutaminyl-tRNA(Gln) + L-glutamate + ADP + phosphate + H(+). Allows the formation of correctly charged Gln-tRNA(Gln) through the transamidation of misacylated Glu-tRNA(Gln) in organisms which lack glutaminyl-tRNA synthetase. The reaction takes place in the presence of glutamine and ATP through an activated gamma-phospho-Glu-tRNA(Gln). This is Glutamyl-tRNA(Gln) amidotransferase subunit A from Streptococcus mutans serotype c (strain ATCC 700610 / UA159).